The following is a 284-amino-acid chain: Deoxyribonuclease-1 (284 aa).

The N-terminal stretch at 1–22 (MRYTGLMGTLLTLVNLLQLAGT) is a signal peptide. An N-linked (GlcNAc...) asparagine glycan is attached at Asn-40. The active site involves Glu-100. Cysteines 123 and 126 form a disulfide. Asn-128 carries N-linked (GlcNAc...) asparagine glycosylation. His-156 is an active-site residue. Cys-195 and Cys-231 are joined by a disulfide.

Belongs to the DNase I family. Requires Ca(2+) as cofactor. It depends on Mg(2+) as a cofactor. N-glycosylated. Highly expressed in the parotid and submandibular gland as well as in the kidney and duodenum (at protein level). Expressed at intermediate level in the ileum, mesenterial lymph nodes, liver, ventral prostate, epididymis, ovary and stomach (at protein level). Expressed at low level in the sublingual, preputial, coagulation and pituitary gland (at protein level). Also present in the lachrymal and thyroid glands, striated muscle, intestine, the urinary bladder and the eye.

It localises to the secreted. The protein resides in the zymogen granule. Its subcellular location is the nucleus envelope. It catalyses the reaction Endonucleolytic cleavage to 5'-phosphodinucleotide and 5'-phosphooligonucleotide end-products.. Its function is as follows. Serum endocuclease secreted into body fluids by a wide variety of exocrine and endocrine organs. Expressed by non-hematopoietic tissues and preferentially cleaves protein-free DNA. Among other functions, seems to be involved in cell death by apoptosis. Binds specifically to G-actin and blocks actin polymerization. Together with DNASE1L3, plays a key role in degrading neutrophil extracellular traps (NETs). NETs are mainly composed of DNA fibers and are released by neutrophils to bind pathogens during inflammation. Degradation of intravascular NETs by DNASE1 and DNASE1L3 is required to prevent formation of clots that obstruct blood vessels and cause organ damage following inflammation. This is Deoxyribonuclease-1 from Mus musculus (Mouse).